We begin with the raw amino-acid sequence, 139 residues long: Putative pre-16S rRNA nuclease (139 aa).

Belongs to the YqgF nuclease family.

The protein resides in the cytoplasm. Its function is as follows. Could be a nuclease involved in processing of the 5'-end of pre-16S rRNA. The polypeptide is Putative pre-16S rRNA nuclease (Caldanaerobacter subterraneus subsp. tengcongensis (strain DSM 15242 / JCM 11007 / NBRC 100824 / MB4) (Thermoanaerobacter tengcongensis)).